Here is a 208-residue protein sequence, read N- to C-terminus: Large ribosomal subunit protein uL4 (208 aa).

A disordered region spans residues 47 to 84; sequence ARAARERSDVARTGKKFGRQKGGGTARHGDRRAPVFIG. The segment covering 49–58 has biased composition (basic and acidic residues); that stretch reads AARERSDVAR.

This sequence belongs to the universal ribosomal protein uL4 family. Part of the 50S ribosomal subunit.

Its function is as follows. One of the primary rRNA binding proteins, this protein initially binds near the 5'-end of the 23S rRNA. It is important during the early stages of 50S assembly. It makes multiple contacts with different domains of the 23S rRNA in the assembled 50S subunit and ribosome. Forms part of the polypeptide exit tunnel. The protein is Large ribosomal subunit protein uL4 of Rhizorhabdus wittichii (strain DSM 6014 / CCUG 31198 / JCM 15750 / NBRC 105917 / EY 4224 / RW1) (Sphingomonas wittichii).